Reading from the N-terminus, the 520-residue chain is Signal peptide peptidase-like 2A (520 aa).

Residues 1-25 (MGPQRRLSPAGAALLWGFLLQLTAA) form the signal peptide. Topologically, residues 26-172 (QEAILHASGN…PSWPNFDYTM (147 aa)) are lumenal. Asparagine 58, asparagine 66, asparagine 74, asparagine 116, asparagine 126, and asparagine 149 each carry an N-linked (GlcNAc...) asparagine glycan. A PA domain is found at 63-151 (SLMNLTSTPL…YKDFRDMNQT (89 aa)). An N-linked (GlcNAc...) (complex) asparagine glycan is attached at asparagine 155. The chain crosses the membrane as a helical span at residues 173 to 193 (VVIFVIAVFTVALGGYWSGLV). Over 194–220 (ELENLKAVTTEDREMRKKKEEYLTFSP) the chain is Cytoplasmic. Residues 221-241 (LTVVIFVVICCVMMVLLYFFY) traverse the membrane as a helical segment. Residues 242-247 (KWLVYV) lie on the Lumenal side of the membrane. A helical membrane pass occupies residues 248-268 (MIAIFCIASAMSLYNCLAALI). The Cytoplasmic segment spans residues 269–285 (HKIPYGQCTIACRGKNM). Residues 286–306 (EVRLIFLSGLCIAVAVVWAVF) traverse the membrane as a helical segment. Residues 307–311 (RNEDR) are Lumenal-facing. A helical membrane pass occupies residues 312-332 (WAWILQDILGIAFCLNLIKTL). The Cytoplasmic segment spans residues 333-340 (KLPNFKSC). The chain crosses the membrane as a helical span at residues 341-361 (VILLGLLLLYDVFFVFITPFI). Aspartate 351 is a catalytic residue. Residues 362 to 399 (TKNGESIMVELAAGPFGNNEKLPVVIRVPKLIYFSVMS) are Lumenal-facing. A helical membrane pass occupies residues 400-420 (VCLMPVSILGFGDIIVPGLLI). The active site involves aspartate 412. The Cytoplasmic portion of the chain corresponds to 421–437 (AYCRRFDVQTGSSYIYY). Residues 438–458 (VSSTVAYAIGMILTFVVLVLM) traverse the membrane as a helical segment. Residues 459 to 460 (KK) lie on the Lumenal side of the membrane. A helical transmembrane segment spans residues 461-481 (GQPALLYLVPCTLITASVVAW). The short motif at 463 to 465 (PAL) is the PAL element. Residues 482–520 (RRKEMKKFWKGNSYQMMDHLDCATNEENPVISGEQIVQQ) lie on the Cytoplasmic side of the membrane. The YXXo lysosomal targeting motif motif lies at 495-498 (YQMM).

This sequence belongs to the peptidase A22B family. In terms of assembly, interacts with ITM2B. In terms of processing, glycosylated. As to expression, ubiquitous.

The protein localises to the late endosome membrane. It is found in the lysosome membrane. The protein resides in the membrane. Intramembrane-cleaving aspartic protease (I-CLiP) that cleaves type II membrane signal peptides in the hydrophobic plane of the membrane. Functions in FASLG, ITM2B and TNF processing. Catalyzes the intramembrane cleavage of the anchored fragment of shed TNF-alpha (TNF), which promotes the release of the intracellular domain (ICD) for signaling to the nucleus. Also responsible for the intramembrane cleavage of Fas antigen ligand FASLG, which promotes the release of the intracellular FasL domain (FasL ICD). Essential for degradation of the invariant chain CD74 that plays a central role in the function of antigen-presenting cells in the immune system. Plays a role in the regulation of innate and adaptive immunity. Catalyzes the intramembrane cleavage of the simian foamy virus envelope glycoprotein gp130 independently of prior ectodomain shedding by furin or furin-like proprotein convertase (PC)-mediated cleavage proteolysis. The protein is Signal peptide peptidase-like 2A of Homo sapiens (Human).